The chain runs to 825 residues: KH domain-containing protein YLL032C (825 aa).

Residues 482–556 form the KH domain; the sequence is PAEESFFIPE…ANICLAKNDL (75 aa). The segment covering 727-740 has biased composition (low complexity); that stretch reads SSKSNTSNSNTNGN. The tract at residues 727-766 is disordered; the sequence is SSKSNTSNSNTNGNFRSMNNAKSRTTIDNTSQSGASPQRH. Over residues 741 to 762 the composition is skewed to polar residues; that stretch reads FRSMNNAKSRTTIDNTSQSGAS. Phosphoserine is present on Ser-762.

It is found in the cytoplasm. This chain is KH domain-containing protein YLL032C, found in Saccharomyces cerevisiae (strain ATCC 204508 / S288c) (Baker's yeast).